The chain runs to 269 residues: uncharacterized protein (269 aa).

Transmembrane regions (helical) follow at residues 64–84 (FVYF…LAGV), 125–145 (YGIA…FLSF), 169–189 (FFIS…FLVL), and 230–250 (VFAT…IAIF).

It is found in the cell membrane. This is an uncharacterized protein from Mycoplasma genitalium (strain ATCC 33530 / DSM 19775 / NCTC 10195 / G37) (Mycoplasmoides genitalium).